The primary structure comprises 167 residues: Elafin (167 aa).

The first 21 residues, 1–21, serve as a signal peptide directing secretion; the sequence is MRSRSFLVLVVVFLICGTLVA. A propeptide spanning residues 22 to 70 is cleaved from the precursor; the sequence is QAAGRIRRPKGKGTKKILALVKGQGPVRGKDQVKGQGPVKGQDLGKSQD. Tandem repeats lie at residues 44-49, 50-55, 56-61, 62-67, 68-73, 74-79, 80-85, 86-91, 92-97, 98-103, 104-109, and 110-115. The segment at 44–115 is 12 X 6 AA tandem repeats of [GSAL]-[QEK]-[DGLP]-[APSLQ]-[VGDFI]-[KR]; it reads GQGPVRGKDQ…DPVKAQPAIK (72 aa). The disordered stretch occupies residues 46-104; that stretch reads GPVRGKDQVKGQGPVKGQDLGKSQDPVKAQLPDKGQDLGKGEDSVKGQDPFKAQLPDKL. The segment at 78–126 is 2 X tandem repeats of SVP-1 like motif; that stretch reads DKGQDLGKGEDSVKGQDPFKAQLPDKLQDPVKAQPAIKRLILLTKPGSC. A compositionally biased stretch (basic and acidic residues) spans 79 to 91; sequence KGQDLGKGEDSVK. SVP-1 clotting repeat units lie at residues 80–101 and 104–126; these read GQDL…AQLP and LQDP…PGSC. The WAP domain occupies 119–167; the sequence is LLTKPGSCPRILIRCLMVNPPNRCLSDAQCPGLKKCCEGFCGKACMDPK. 4 cysteine pairs are disulfide-bonded: cysteine 126/cysteine 155, cysteine 133/cysteine 159, cysteine 142/cysteine 154, and cysteine 148/cysteine 163.

In terms of tissue distribution, trachea and large intestine.

Its function is as follows. Neutrophil and pancreatic elastase-specific inhibitor of skin. It may prevent elastase-mediated tissue proteolysis. The chain is Elafin from Sus scrofa (Pig).